Here is a 162-residue protein sequence, read N- to C-terminus: Cyclic pyranopterin monophosphate synthase (162 aa).

Substrate contacts are provided by residues 75–77 (LCH) and 113–114 (ME). Residue Asp128 is part of the active site.

This sequence belongs to the MoaC family. Homohexamer; trimer of dimers.

The catalysed reaction is (8S)-3',8-cyclo-7,8-dihydroguanosine 5'-triphosphate = cyclic pyranopterin phosphate + diphosphate. The protein operates within cofactor biosynthesis; molybdopterin biosynthesis. In terms of biological role, catalyzes the conversion of (8S)-3',8-cyclo-7,8-dihydroguanosine 5'-triphosphate to cyclic pyranopterin monophosphate (cPMP). In Burkholderia ambifaria (strain ATCC BAA-244 / DSM 16087 / CCUG 44356 / LMG 19182 / AMMD) (Burkholderia cepacia (strain AMMD)), this protein is Cyclic pyranopterin monophosphate synthase.